Here is a 142-residue protein sequence, read N- to C-terminus: MKKEELKKKLSPLAYRVTQENGTEARFTNEFDDFFEKGLYVDIVSGEPLFTSLDKYQSGCGWPAFTQPIDKKVVKEKRDKSLFMERTEVRSSNADSHLGHVFTDGPLDKGGLRYCINSAALRFIPFDQLESEGYGDYIKYFS.

Residues 3–126 form the MsrB domain; the sequence is KEELKKKLSP…NSAALRFIPF (124 aa). Cysteine 115 (nucleophile) is an active-site residue.

The protein belongs to the MsrB Met sulfoxide reductase family.

It catalyses the reaction L-methionyl-[protein] + [thioredoxin]-disulfide + H2O = L-methionyl-(R)-S-oxide-[protein] + [thioredoxin]-dithiol. This Lactococcus lactis subsp. cremoris (strain MG1363) protein is Peptide methionine sulfoxide reductase MsrB.